Here is a 397-residue protein sequence, read N- to C-terminus: Teichoic acid D-alanine hydrolase (397 aa).

Residues 1-23 (MKFNKVKLVIHACVLLFIIISIA) form the signal peptide.

The protein resides in the cell membrane. The catalysed reaction is [(4-D-Ala)-(2-GlcNAc)-Rib-ol-P]n-[Gro-P]m-beta-D-ManNAc-(1-&gt;4)-alpha-D-GlcNAc-P-peptidoglycan + n H2O = [(2-GlcNAc)-Rib-ol-P]n-[Gro-P]m-beta-D-ManNAc-(1-&gt;4)-alpha-D-GlcNAc-P-peptidoglycan + n D-alanine.. Functionally, catalyzes the liberation of D-alanyl moieties present on wall teichoic acid (WTA) and lipoteichoic acid (LTA). Affects the methicillin resistance level and autolysis in the presence of Triton X-100 as well as the cell wall structure. The protein is Teichoic acid D-alanine hydrolase (fmtA) of Staphylococcus aureus (strain Mu50 / ATCC 700699).